A 347-amino-acid chain; its full sequence is Globoside alpha-1,3-N-acetylgalactosaminyltransferase 1 (347 aa).

The Cytoplasmic portion of the chain corresponds to 1 to 6 (MTRPRL). The chain crosses the membrane as a helical; Signal-anchor for type II membrane protein span at residues 7 to 27 (AQGLAFFLLGGTGLWVLWKFI). The Lumenal portion of the chain corresponds to 28 to 347 (KDWLLVSYIP…VKKNANWLRT (320 aa)). The N-linked (GlcNAc...) asparagine glycan is linked to N108. Residues 116-121 (FAVGKY), 206-208 (DVD), and 228-231 (HPGY) contribute to the substrate site. Mn(2+)-binding residues include D206 and D208. Residue E298 is the Nucleophile of the active site.

The protein belongs to the glycosyltransferase 6 family. Requires Mn(2+) as cofactor.

It localises to the golgi apparatus membrane. It catalyses the reaction a globoside Gb4Cer (d18:1(4E)) + UDP-N-acetyl-alpha-D-galactosamine = a globoside Forssman (d18:1(4E)) + UDP + H(+). The enzyme catalyses a globoside Gb4Cer + UDP-N-acetyl-alpha-D-galactosamine = a globoside IV3GalNAc-Gb4Cer + UDP + H(+). It participates in protein modification; protein glycosylation. In terms of biological role, catalyzes the formation of Forssman glycolipid via the addition of N-acetylgalactosamine (GalNAc) in alpha-1,3-linkage to GalNAcb-1,3Gala-1,4Galb-1,4GlcCer (Gb4Cer). Forssman glycolipid (also called Forssman antigen; FG) probably serves for adherence of some pathogens. Conversely, it diminishes Shiga toxins susceptibility. In Mus musculus (Mouse), this protein is Globoside alpha-1,3-N-acetylgalactosaminyltransferase 1.